Consider the following 140-residue polypeptide: Ribonuclease P protein component (140 aa).

Belongs to the RnpA family. Consists of a catalytic RNA component (M1 or rnpB) and a protein subunit.

The catalysed reaction is Endonucleolytic cleavage of RNA, removing 5'-extranucleotides from tRNA precursor.. Its function is as follows. RNaseP catalyzes the removal of the 5'-leader sequence from pre-tRNA to produce the mature 5'-terminus. It can also cleave other RNA substrates such as 4.5S RNA. The protein component plays an auxiliary but essential role in vivo by binding to the 5'-leader sequence and broadening the substrate specificity of the ribozyme. This chain is Ribonuclease P protein component, found in Ralstonia pickettii (strain 12J).